Reading from the N-terminus, the 262-residue chain is Hemin import ATP-binding protein HmuV (262 aa).

The ABC transporter domain occupies 3 to 244 (LQARNLTLAR…DHMRRVYGIE (242 aa)). 35-42 (GANGAGKS) is an ATP binding site.

This sequence belongs to the ABC transporter superfamily. Heme (hemin) importer (TC 3.A.1.14.5) family. As to quaternary structure, the complex is composed of two ATP-binding proteins (HmuV), two transmembrane proteins (HmuU) and a solute-binding protein (HmuT).

It localises to the cell inner membrane. Part of the ABC transporter complex HmuTUV involved in hemin import. Responsible for energy coupling to the transport system. The chain is Hemin import ATP-binding protein HmuV from Bordetella parapertussis (strain 12822 / ATCC BAA-587 / NCTC 13253).